Here is a 510-residue protein sequence, read N- to C-terminus: Portal protein (510 aa).

It belongs to the podoviridae head-to-tail connector protein family. Homododecamer.

It is found in the virion. In terms of biological role, forms the portal vertex of the capsid. This portal plays critical roles in head assembly, genome packaging, neck/tail attachment, and genome ejection. The portal protein multimerizes as a single ring-shaped homododecamer arranged around a central channel. In Pseudomonas phage phiKMV, this protein is Portal protein.